The sequence spans 352 residues: S-adenosylmethionine:tRNA ribosyltransferase-isomerase (352 aa).

The protein belongs to the QueA family. In terms of assembly, monomer.

Its subcellular location is the cytoplasm. The catalysed reaction is 7-aminomethyl-7-carbaguanosine(34) in tRNA + S-adenosyl-L-methionine = epoxyqueuosine(34) in tRNA + adenine + L-methionine + 2 H(+). Its pathway is tRNA modification; tRNA-queuosine biosynthesis. In terms of biological role, transfers and isomerizes the ribose moiety from AdoMet to the 7-aminomethyl group of 7-deazaguanine (preQ1-tRNA) to give epoxyqueuosine (oQ-tRNA). This Vibrio cholerae serotype O1 (strain ATCC 39315 / El Tor Inaba N16961) protein is S-adenosylmethionine:tRNA ribosyltransferase-isomerase.